The following is a 322-amino-acid chain: Atrochrysone carboxyl ACP thioesterase nsrC (322 aa).

Residues His105, His107, Asp109, and His110 each contribute to the Zn(2+) site. The active-site Proton donor/acceptor is Asp109.

Belongs to the metallo-beta-lactamase superfamily. Requires Zn(2+) as cofactor.

The enzyme catalyses atrochrysone carboxyl-[ACP] + H2O = atrochrysone carboxylate + holo-[ACP] + H(+). Its pathway is secondary metabolite biosynthesis. Functionally, atrochrysone carboxyl ACP thioesterase; part of the gene cluster that mediates the biosynthesis of the tetrahydroxanthone dimer neosartorin, which exhibits antibacterial activity. The two different monomeric units appear to be synthesized by the same set of enzymes, among which the Baeyer-Villiger monooxygenase nsrF is the key enzyme for the divergence of the biosynthetic routes. The pathway begins with the synthesis of atrochrysone thioester by the polyketide synthase nsrB. The atrochrysone carboxyl ACP thioesterase nsrC then breaks the thioester bond and releases the atrochrysone carboxylic acid from AacuL. Atrochrysone carboxylic acid is decarboxylated by the decarboxylase nsrE, and oxidized by the anthrone oxygenase nsrD to yield emodin. Emodin is then reduced to emodin hydroquinone by the oxidoreductase nsrR. A-ring reduction by the short chain dehydrogenase nsrJ, dehydration by the scytalone dehydratase-like protein nsrI and probable spontaneous re-oxidation, results in overall deoxygenation to chrysophanol. The Baeyer-Villiger monooxygenase nsrF accepts chrysophanol as a substrate to insert one oxygen atom at two different positions to yield the precursors of both monomric units. NsrF is promiscuous/flexible in interacting with the 2 (non methylated and methylated) aromatic rings of chrysophanol, thus diverging the biosynthetic pathway at this point. After the hydrolysis of the lactones, methylesterification by the methyltransferase nsrG yields respectively moniliphenone and 2,2',6'-trihydroxy-4-methyl-6-methoxya-cyldiphenylmethanone. The next steps are the hydroxylation by the FAD-dependent monooxygenase nsrK, followed by isomerization by the monooxygenase nsrQ. The short chain dehydrogenase/reductase nsrO then catalyzes the C-5 ketoreduction to give the xanthone skeleton of blennolide C and 5-acetylblennolide A. The acetyltransferase nsrL has a strict substrate specificity and uses only blennolide A but not blennolide C to yield 5-acetylblennolide A as the single-acetylated product. In the final step of the biosynthesis, the heterodimerization of the 2 xanthones, blennolide C and 5-acetylblennolide A, is catalyzed by the cytochrome P450 monooxygenase nsrP. NsrP can utilize at least three different xanthones as its substrates to perform the dimerization reaction. This is Atrochrysone carboxyl ACP thioesterase nsrC from Aspergillus novofumigatus (strain IBT 16806).